The following is a 293-amino-acid chain: Ethanolamine ammonia-lyase small subunit (293 aa).

Residues Val-207 and Glu-228 each contribute to the adenosylcob(III)alamin site.

The protein belongs to the EutC family. As to quaternary structure, the basic unit is a heterodimer which dimerizes to form tetramers. The heterotetramers trimerize; 6 large subunits form a core ring with 6 small subunits projecting outwards. Adenosylcob(III)alamin is required as a cofactor.

The protein resides in the bacterial microcompartment. It carries out the reaction ethanolamine = acetaldehyde + NH4(+). It functions in the pathway amine and polyamine degradation; ethanolamine degradation. Functionally, catalyzes the deamination of various vicinal amino-alcohols to oxo compounds. Allows this organism to utilize ethanolamine as the sole source of nitrogen and carbon in the presence of external vitamin B12. This Listeria innocua serovar 6a (strain ATCC BAA-680 / CLIP 11262) protein is Ethanolamine ammonia-lyase small subunit.